Here is a 91-residue protein sequence, read N- to C-terminus: Protein RacC (91 aa).

This chain is Protein RacC (racC), found in Escherichia coli (strain K12).